The following is a 391-amino-acid chain: DNA/RNA-binding protein KIN17 (391 aa).

The C2H2-type zinc-finger motif lies at Cys28–His50. The segment at Gln51 to Lys160 is winged helix-turn-helix (wHTH). Lys135 bears the N6,N6,N6-trimethyllysine; by METTL22; alternate mark. Lys135 is modified (N6-methyllysine; alternate). Coiled coils occupy residues Glu147 to Gly180 and Ala252 to Thr275. Positions Asn206 to Ala258 are disordered. Positions Gly282 to Thr332 are C-terminal subdomain A. Positions Gly338 to Lys389 are C-terminal subdomain B.

The protein belongs to the KIN17 family. As to quaternary structure, associated with DNA polymerase alpha, RFC1 and cyclin A, in multiprotein DNA replication complexes. Also associates with replication origins at the G1/S phase boundary and throughout the S phase in vivo. Highly expressed in transformed mouse AtT20 neuroendocrine cells. Expressed at a lower level in testis, kidney, skeletal muscle, liver, lung, spleen, brain and heart and kidney. In testis, expressed at much higher levels in proliferating cells than in differentiating cells. Not detected in embryo.

It localises to the nucleus. The protein resides in the cytoplasm. Functionally, involved in DNA replication and the cellular response to DNA damage. May participate in DNA replication factories and create a bridge between DNA replication and repair mediated by high molecular weight complexes. May play a role in illegitimate recombination and regulation of gene expression. May participate in mRNA processing. Binds, in vitro, to double-stranded DNA. Also shown to bind preferentially to curved DNA in vitro and in vivo. Binds via its C-terminal domain to RNA in vitro. This Mus musculus (Mouse) protein is DNA/RNA-binding protein KIN17.